A 131-amino-acid chain; its full sequence is Translation initiation factor 5A (131 aa).

Position 37 is a hypusine (Lys37).

Belongs to the eIF-5A family.

Its subcellular location is the cytoplasm. In terms of biological role, functions by promoting the formation of the first peptide bond. The polypeptide is Translation initiation factor 5A (eIF5A) (Methanococcus maripaludis (strain C5 / ATCC BAA-1333)).